We begin with the raw amino-acid sequence, 478 residues long: Glycogen synthase (478 aa).

Residue Lys-15 participates in ADP-alpha-D-glucose binding.

Belongs to the glycosyltransferase 1 family. Bacterial/plant glycogen synthase subfamily.

It catalyses the reaction [(1-&gt;4)-alpha-D-glucosyl](n) + ADP-alpha-D-glucose = [(1-&gt;4)-alpha-D-glucosyl](n+1) + ADP + H(+). The protein operates within glycan biosynthesis; glycogen biosynthesis. In terms of biological role, synthesizes alpha-1,4-glucan chains using ADP-glucose. This chain is Glycogen synthase, found in Enterobacter sp. (strain 638).